A 2207-amino-acid chain; its full sequence is Mediator of RNA polymerase II transcription subunit 13-like (2207 aa).

Residues 337–355 (VQSAASHLGSQDGGMSTMH) show a composition bias toward polar residues. Disordered stretches follow at residues 337 to 368 (VQSA…PKLH), 384 to 403 (AQSK…AAHS), 431 to 479 (VGPS…KRPL), and 519 to 574 (KYDK…VPVN). A compositionally biased stretch (basic residues) spans 356-368 (SPKRSRKTPPKLH). Residues 384-394 (AQSKRSQMSTP) are compositionally biased toward polar residues. A compositionally biased stretch (low complexity) spans 442 to 453 (PGFSAGLPSSSS). Residues 463 to 475 (KTTERQEKGDKLQ) are compositionally biased toward basic and acidic residues. The segment covering 528-539 (SRNTSKQMNLNP) has biased composition (polar residues). Residues 546–555 (PISPLPPTLS) are compositionally biased toward pro residues. 2 positions are modified to phosphoserine: S548 and S555. The LXXLL motif 1 motif lies at 664–668 (LQRLL). Residues 731–747 (GTEKDSLKKNKSEDGFG) are compositionally biased toward basic and acidic residues. The tract at residues 731-767 (GTEKDSLKKNKSEDGFGTKDVTTPGHSTPVPDGKNAM) is disordered. 2 positions are modified to phosphoserine: S812 and S821. Positions 816-847 (ELGAVSPALRSSKMPTVGTEERPPGKDGRAAG) are disordered. Residues 834 to 844 (TEERPPGKDGR) are compositionally biased toward basic and acidic residues. The residue at position 918 (S918) is a Phosphoserine. The disordered stretch occupies residues 1004 to 1091 (DPDYVNTPQM…STTRPLNSVE (88 aa)). Positions 1009-1019 (NTPQMNTPVTL) are enriched in polar residues. The span at 1020–1031 (NSAAPASNSGAG) shows a compositional bias: low complexity. Polar residues predominate over residues 1072–1087 (TDQGSPASTPSTTRPL). Positions 1224–1228 (LLLLL) match the LXXLL motif 2 motif. Positions 1379-1400 (LPIPTLLVGYDKEFLTISPFSL) are leucine-zipper. Disordered stretches follow at residues 1523–1652 (LMPP…SVTE) and 2042–2077 (GNLH…QGER). Low complexity predominate over residues 1541-1593 (PGNAGSLPSNSGSGAPPAGSAFNPTSSSSANPTTSSSSASSGPPGSSAASAPG). 2 stretches are compositionally biased toward polar residues: residues 1612-1624 (QNPS…TDRT) and 1635-1649 (PGQS…GQDS). At S2080 the chain carries Phosphoserine.

This sequence belongs to the Mediator complex subunit 13 family. In terms of assembly, component of the Mediator complex, which is composed of MED1, MED4, MED6, MED7, MED8, MED9, MED10, MED11, MED12, MED13, MED13L, MED14, MED15, MED16, MED17, MED18, MED19, MED20, MED21, MED22, MED23, MED24, MED25, MED26, MED27, MED29, MED30, MED31, CCNC, CDK8 and CDC2L6/CDK11. The MED12, MED13, CCNC and CDK8 subunits form a distinct module termed the CDK8 module. Mediator containing the CDK8 module is less active than Mediator lacking this module in supporting transcriptional activation. Individual preparations of the Mediator complex lacking one or more distinct subunits have been variously termed ARC, CRSP, DRIP, PC2, SMCC and TRAP. As to expression, highly expressed in heart and weakly expressed in brain, spleen, lung, liver, kidney and testis.

The protein localises to the nucleus. Functionally, component of the Mediator complex, a coactivator involved in the regulated transcription of nearly all RNA polymerase II-dependent genes. Mediator functions as a bridge to convey information from gene-specific regulatory proteins to the basal RNA polymerase II transcription machinery. Mediator is recruited to promoters by direct interactions with regulatory proteins and serves as a scaffold for the assembly of a functional preinitiation complex with RNA polymerase II and the general transcription factors. This subunit may specifically regulate transcription of targets of the Wnt signaling pathway and SHH signaling pathway. The chain is Mediator of RNA polymerase II transcription subunit 13-like (Med13l) from Mus musculus (Mouse).